Consider the following 91-residue polypeptide: Small ribosomal subunit protein bS20 (91 aa).

Disordered stretches follow at residues 1–26 (MALR…RSRK) and 67–91 (HKNA…AQQS).

It belongs to the bacterial ribosomal protein bS20 family.

Functionally, binds directly to 16S ribosomal RNA. This is Small ribosomal subunit protein bS20 from Deinococcus deserti (strain DSM 17065 / CIP 109153 / LMG 22923 / VCD115).